A 1018-amino-acid polypeptide reads, in one-letter code: Inner centromere protein pic1 (1018 aa).

Ser-171 carries the post-translational modification Phosphoserine. 8 disordered regions span residues 184–207 (VPLR…PKQK), 247–287 (RTKD…SSSP), 306–365 (AKES…PPEI), 522–556 (TRKS…LPPS), 570–756 (EPLH…TSKP), 781–813 (EPDS…EDRK), 848–867 (TKQN…SQSN), and 877–944 (HAPA…LPSW). Composition is skewed to polar residues over residues 189–199 (TSPSPSETADS) and 268–287 (PSTT…SSSP). The span at 309–320 (SLTSSTRLSTSY) shows a compositional bias: low complexity. Composition is skewed to polar residues over residues 329–339 (VAFSSETVTSS) and 522–554 (TRKS…SSLP). 2 stretches are compositionally biased toward basic and acidic residues: residues 570 to 580 (EPLHDDSRQNS) and 624 to 644 (RSSE…RELS). The span at 645–664 (NNEFPSRQTKTVTSANSSNI) shows a compositional bias: polar residues. Composition is skewed to basic and acidic residues over residues 665–679 (RDME…RSEP) and 692–702 (KPFEEKSEKPT). Polar residues-rich tracts occupy residues 705-719 (RLVT…SWHS) and 784-808 (SVTS…TNSQ). The span at 890 to 902 (PSSKSPLLKTPKS) shows a compositional bias: low complexity.

It belongs to the INCENP family. In terms of assembly, component of the CPC complex at least composed of ark1, bir1 and pic1.

It is found in the nucleus. It localises to the cytoplasm. The protein resides in the cytoskeleton. The protein localises to the spindle. Its function is as follows. Component of the chromosomal passenger complex (CPC), a complex that acts as a key regulator of mitosis. Has a role in sister chromatid cohesion and condensation. This is Inner centromere protein pic1 (pic1) from Schizosaccharomyces pombe (strain 972 / ATCC 24843) (Fission yeast).